The primary structure comprises 319 residues: Cytochrome f (319 aa).

The N-terminal stretch at 1–34 is a signal peptide; that stretch reads MQNRNTYEWAKKMTRLISVLVMIHIITRTSISNA. Heme is bound by residues Y35, C55, C58, and H59. Residues 287-304 traverse the membrane as a helical segment; the sequence is GLLLFLASVILAQIFLVL.

Belongs to the cytochrome f family. The 4 large subunits of the cytochrome b6-f complex are cytochrome b6, subunit IV (17 kDa polypeptide, petD), cytochrome f and the Rieske protein, while the 4 small subunits are PetG, PetL, PetM and PetN. The complex functions as a dimer. Heme is required as a cofactor.

The protein resides in the plastid. The protein localises to the chloroplast thylakoid membrane. In terms of biological role, component of the cytochrome b6-f complex, which mediates electron transfer between photosystem II (PSII) and photosystem I (PSI), cyclic electron flow around PSI, and state transitions. The chain is Cytochrome f (petA) from Pinus thunbergii (Japanese black pine).